Here is a 567-residue protein sequence, read N- to C-terminus: Septation ring formation regulator EzrA (567 aa).

Residues 1–2 lie on the Extracellular side of the membrane; the sequence is ME. A helical membrane pass occupies residues 3 to 21; the sequence is IAVIVLLLLGGVMIYNHVY. Residues 22-567 lie on the Cytoplasmic side of the membrane; it reads RKKMYSEIDR…IFRDERSKEE (546 aa). Coiled coils occupy residues 97-188 and 254-465; these read RYAK…LTAS and REIV…LEEK.

Belongs to the EzrA family.

It localises to the cell membrane. Its function is as follows. Negative regulator of FtsZ ring formation; modulates the frequency and position of FtsZ ring formation. Inhibits FtsZ ring formation at polar sites. Interacts either with FtsZ or with one of its binding partners to promote depolymerization. The protein is Septation ring formation regulator EzrA of Geobacillus sp. (strain WCH70).